We begin with the raw amino-acid sequence, 219 residues long: Probable nicotinate-nucleotide adenylyltransferase (219 aa).

Belongs to the NadD family.

The enzyme catalyses nicotinate beta-D-ribonucleotide + ATP + H(+) = deamido-NAD(+) + diphosphate. It functions in the pathway cofactor biosynthesis; NAD(+) biosynthesis; deamido-NAD(+) from nicotinate D-ribonucleotide: step 1/1. Functionally, catalyzes the reversible adenylation of nicotinate mononucleotide (NaMN) to nicotinic acid adenine dinucleotide (NaAD). In Cronobacter sakazakii (strain ATCC BAA-894) (Enterobacter sakazakii), this protein is Probable nicotinate-nucleotide adenylyltransferase.